We begin with the raw amino-acid sequence, 428 residues long: Glutamate-1-semialdehyde 2,1-aminomutase (428 aa).

Position 265 is an N6-(pyridoxal phosphate)lysine (Lys265).

Belongs to the class-III pyridoxal-phosphate-dependent aminotransferase family. HemL subfamily. Homodimer. Pyridoxal 5'-phosphate is required as a cofactor.

It is found in the cytoplasm. The enzyme catalyses (S)-4-amino-5-oxopentanoate = 5-aminolevulinate. It functions in the pathway porphyrin-containing compound metabolism; protoporphyrin-IX biosynthesis; 5-aminolevulinate from L-glutamyl-tRNA(Glu): step 2/2. This is Glutamate-1-semialdehyde 2,1-aminomutase from Aeromonas salmonicida (strain A449).